We begin with the raw amino-acid sequence, 278 residues long: D-aminoacyl-tRNA deacylase (278 aa).

It belongs to the DtdA deacylase family. In terms of assembly, monomer. Requires Zn(2+) as cofactor.

It carries out the reaction a D-aminoacyl-tRNA + H2O = a tRNA + a D-alpha-amino acid + H(+). The enzyme catalyses glycyl-tRNA(Ala) + H2O = tRNA(Ala) + glycine + H(+). Its function is as follows. D-aminoacyl-tRNA deacylase with broad substrate specificity. By recycling D-aminoacyl-tRNA to D-amino acids and free tRNA molecules, this enzyme counteracts the toxicity associated with the formation of D-aminoacyl-tRNA entities in vivo. In Archaeoglobus fulgidus (strain ATCC 49558 / DSM 4304 / JCM 9628 / NBRC 100126 / VC-16), this protein is D-aminoacyl-tRNA deacylase.